The sequence spans 323 residues: Fructose-1,6-bisphosphatase class 1 (323 aa).

The Mg(2+) site is built by glutamate 93, aspartate 114, leucine 116, and aspartate 117. Substrate contacts are provided by residues 117–120, asparagine 205, tyrosine 233, and lysine 263; that span reads DGSS. Position 269 (glutamate 269) interacts with Mg(2+).

The protein belongs to the FBPase class 1 family. Homotetramer. The cofactor is Mg(2+).

It localises to the cytoplasm. It carries out the reaction beta-D-fructose 1,6-bisphosphate + H2O = beta-D-fructose 6-phosphate + phosphate. It participates in carbohydrate biosynthesis; gluconeogenesis. In Sulfurihydrogenibium sp. (strain YO3AOP1), this protein is Fructose-1,6-bisphosphatase class 1.